The following is a 112-amino-acid chain: Nitrogenase-stabilizing/protective protein NifW (112 aa).

The protein belongs to the NifW family. In terms of assembly, homotrimer; associates with NifD.

May protect the nitrogenase Fe-Mo protein from oxidative damage. The sequence is that of Nitrogenase-stabilizing/protective protein NifW from Burkholderia vietnamiensis (strain G4 / LMG 22486) (Burkholderia cepacia (strain R1808)).